The sequence spans 634 residues: MSIITTAFALSLLATTAFAVPPETPRIELQAERGLGDQSYAPWQVDCPSNVTWIRNATTGLGTGERAYIEAREKLVQPAIEQMMAARGLETPPRTPVIGVALAGGGYRAMLTGLGGIMGMMNESTEASQSETGGWLDGVSYWSGLSGGSWATGSFMSNGGQLPTTLLENLWNIDSNLVFPDDGKLSFYTNLYTETNAKSDLGFPVQITDIWGLAIGSHVLPEPYQLSNTPNLTFSSLPSVVAALGNASLPMPIIVAAEREAGELVIAENATVWEFTPYEFGSWAFGSQYKSPGAFTPIEYLGTSVDDGSPNGTCWKGFDQLSFVMGTSATLFNGAFLELNGTDSGLLTNLITAFLADLGEDQADISRIPNSFSNYNSGENPIYNLTYITLVDAGETNQNIPLEPLLVPTRDVDAIVAFDSSYDSDYIWPNGTALRTTYERAKILAEHENTRVLMPEVPSMNGFVNGGYNSRPTFFGCNDTTTPVIIYIPSYPWSFAANTSTYQLSYENNEANEMLLNGMRSLTLNHSVPTWPTCFACALTDRSFMYTSENRSTTCQECFDTWCWAGDDNTTEPANYEPVINSVPPWLIANNLSIGMADAPGSNESTAGTASSGAAKMGVGMGMVALTAGLGLML.

A signal peptide spans 1 to 19; the sequence is MSIITTAFALSLLATTAFA. Residues 46–569 form the PLA2c domain; sequence DCPSNVTWIR…DTWCWAGDDN (524 aa). N-linked (GlcNAc...) asparagine glycans are attached at residues Asn-50, Asn-56, Asn-122, Asn-231, Asn-246, Asn-269, Asn-311, Asn-340, Asn-384, Asn-430, Asn-478, Asn-498, Asn-525, Asn-550, Asn-569, Asn-591, and Asn-603.

Belongs to the lysophospholipase family. N-glycosylated.

Its subcellular location is the secreted. It carries out the reaction a 1-acyl-sn-glycero-3-phosphocholine + H2O = sn-glycerol 3-phosphocholine + a fatty acid + H(+). Exhibits phospholipase B (PLB), lysophospholipase (LPL) and lysophospholipase/transacylase (LPTA) activities. This is Phospholipase B (PLB1) from Cryptococcus neoformans var. neoformans serotype D (strain JEC21 / ATCC MYA-565) (Filobasidiella neoformans).